The following is a 383-amino-acid chain: Adaptive-response sensory kinase SasA (383 aa).

One can recognise a Histidine kinase domain in the interval 152–365 (MVAHELRTPL…CFTFNVPIWQ (214 aa)). Position 155 is a phosphohistidine; by autocatalysis (histidine 155).

As to quaternary structure, homooligomerizes. Interacts with KaiC. Participates in the KaiABC clock complex, whose core is composed of a KaiC homohexamer, 6 KaiB and up to 6 KaiA dimers. SasA and KaiB(fs) compete to bind to KaiC.

The catalysed reaction is ATP + protein L-histidine = ADP + protein N-phospho-L-histidine.. Member of the two-component regulatory system SasA/RpaA involved in genome-wide circadian gene expression. One of several clock output pathways. Participates in the Kai clock protein complex, the main circadian regulator in cyanobacteria, via its interaction with KaiC. KaiC enhances the autophosphorylation activity of SasA, which then transfers its phosphate group to RpaA to activate it. In addition to its output function, recruits fold-shifted KaiB (KaiB(fs)) to KaiC to cooperatively form the KaiB(6):KaiC(6) complex (independent of SasA kinase activity). Required for robustness of the circadian rhythm of gene expression and is involved in clock output, also required for adaptation to light/dark cycles. This Synechococcus sp. (strain CC9311) protein is Adaptive-response sensory kinase SasA.